The primary structure comprises 327 residues: Probable pectinesterase A (327 aa).

The first 19 residues, 1–19, serve as a signal peptide directing secretion; it reads MHTPYLLGALAALAATAVG. An N-linked (GlcNAc...) asparagine glycan is attached at Asn-84. Gln-145 lines the substrate pocket. Asp-168 acts as the Proton donor in catalysis. Asp-189 acts as the Nucleophile in catalysis. The substrate site is built by Arg-249 and Trp-251. Asn-288 carries an N-linked (GlcNAc...) asparagine glycan.

The protein belongs to the pectinesterase family.

The protein localises to the secreted. It carries out the reaction [(1-&gt;4)-alpha-D-galacturonosyl methyl ester](n) + n H2O = [(1-&gt;4)-alpha-D-galacturonosyl](n) + n methanol + n H(+). The protein operates within glycan metabolism; pectin degradation; 2-dehydro-3-deoxy-D-gluconate from pectin: step 1/5. Functionally, involved in maceration and soft-rotting of plant tissue. The protein is Probable pectinesterase A (pmeA) of Aspergillus niger (strain ATCC MYA-4892 / CBS 513.88 / FGSC A1513).